Consider the following 242-residue polypeptide: Uridylate kinase (242 aa).

12-15 (KLSG) lines the ATP pocket. Residues 20 to 25 (GQKGYG) form an involved in allosteric activation by GTP region. Position 54 (Gly-54) interacts with UMP. ATP contacts are provided by Gly-55 and Arg-59. UMP contacts are provided by residues Asp-74 and 135–142 (TGNPYFST). Gln-163, Tyr-168, and Asp-171 together coordinate ATP.

This sequence belongs to the UMP kinase family. Homohexamer.

Its subcellular location is the cytoplasm. It catalyses the reaction UMP + ATP = UDP + ADP. The protein operates within pyrimidine metabolism; CTP biosynthesis via de novo pathway; UDP from UMP (UMPK route): step 1/1. Allosterically activated by GTP. Inhibited by UTP. Its function is as follows. Catalyzes the reversible phosphorylation of UMP to UDP. This chain is Uridylate kinase, found in Desulforamulus reducens (strain ATCC BAA-1160 / DSM 100696 / MI-1) (Desulfotomaculum reducens).